Consider the following 70-residue polypeptide: UPF0270 protein VIBHAR_00073 (70 aa).

The protein belongs to the UPF0270 family.

In Vibrio campbellii (strain ATCC BAA-1116), this protein is UPF0270 protein VIBHAR_00073.